Consider the following 82-residue polypeptide: DNA-directed RNA polymerase subunit Rpo5 (82 aa).

Belongs to the archaeal Rpo5/eukaryotic RPB5 RNA polymerase subunit family. In terms of assembly, part of the RNA polymerase complex.

The protein localises to the cytoplasm. It carries out the reaction RNA(n) + a ribonucleoside 5'-triphosphate = RNA(n+1) + diphosphate. Functionally, DNA-dependent RNA polymerase (RNAP) catalyzes the transcription of DNA into RNA using the four ribonucleoside triphosphates as substrates. The polypeptide is DNA-directed RNA polymerase subunit Rpo5 (Thermococcus onnurineus (strain NA1)).